The following is a 162-amino-acid chain: Caveolin-2 (162 aa).

The Cytoplasmic portion of the chain corresponds to 1 to 86 (MGLETEKADV…FEMSKYVIYK (86 aa)). Tyr-19 bears the Phosphotyrosine; by SRC mark. A phosphoserine mark is found at Ser-20 and Ser-23. At Tyr-27 the chain carries Phosphotyrosine; by SRC. Positions 87 to 107 (FLTVFLAIPLAFAAGILFATL) form an intramembrane region, helical. Topologically, residues 108–162 (SCLHIWIIMPFVKTCLMVLPSVQTIWKSVTDVVIAPLCTSVGRSFSSVSLQLSHD) are cytoplasmic.

It belongs to the caveolin family. Monomer or homodimer. Interacts with CAV1; the interaction forms a stable heterooligomeric complex that is required for targeting to lipid rafts and for caveolae formation. Tyrosine phosphorylated forms do not form heterooligomers with the Tyr-19-phosphorylated form existing as a monomer or dimer, and the Tyr-27-form as a monomer only. Interacts (tyrosine phosphorylated form) with the SH2 domain-containing proteins, RASA1, NCK1 and SRC. Interacts (tyrosine phosphorylated form) with INSR, the interaction (Tyr-27-phosphorylated form) is increased on insulin stimulation. Interacts (Tyr-19 phosphorylated form) with MAPK1 (phosphorylated form); the interaction, promoted by insulin, leads to nuclear location and MAPK1 activation. Interacts with STAT3; the interaction is increased on insulin-induced tyrosine phosphorylation leading to STAT activation. Post-translationally, phosphorylated on serine and tyrosine residues. CAV1 promotes phosphorylation on Ser-23 which then targets the complex to the plasma membrane, lipid rafts and caveolae. Phosphorylation on both Tyr-19 and Tyr-27 is required for insulin-induced 'Ser-727' phosphorylation of STAT3 and its activation. Phosphorylation on Tyr-19 is required for insulin-induced phosphorylation of MAPK1 and DNA binding of STAT3. Tyrosine phosphorylation is induced by both EGF and insulin.

Its subcellular location is the nucleus. It is found in the cytoplasm. The protein resides in the golgi apparatus membrane. The protein localises to the cell membrane. It localises to the membrane. Its subcellular location is the caveola. Its function is as follows. May act as a scaffolding protein within caveolar membranes. Interacts directly with G-protein alpha subunits and can functionally regulate their activity. Acts as an accessory protein in conjunction with CAV1 in targeting to lipid rafts and driving caveolae formation. Positive regulator of cellular mitogenesis of the MAPK signaling pathway. Required for the insulin-stimulated nuclear translocation and activation of MAPK1 and STAT3, and the subsequent regulation of cell cycle progression. This Muntiacus muntjak (Barking deer) protein is Caveolin-2 (CAV2).